Here is a 180-residue protein sequence, read N- to C-terminus: Segregation and condensation protein B (180 aa).

Belongs to the ScpB family. Homodimer. Homodimerization may be required to stabilize the binding of ScpA to the Smc head domains. Component of a cohesin-like complex composed of ScpA, ScpB and the Smc homodimer, in which ScpA and ScpB bind to the head domain of Smc. The presence of the three proteins is required for the association of the complex with DNA.

It localises to the cytoplasm. Functionally, participates in chromosomal partition during cell division. May act via the formation of a condensin-like complex containing Smc and ScpA that pull DNA away from mid-cell into both cell halves. The sequence is that of Segregation and condensation protein B from Staphylococcus aureus (strain USA300).